Here is a 422-residue protein sequence, read N- to C-terminus: Glucose-1-phosphate adenylyltransferase (422 aa).

Alpha-D-glucose 1-phosphate-binding positions include Tyr108, Gly173, 188 to 189 (EK), and Ser206.

This sequence belongs to the bacterial/plant glucose-1-phosphate adenylyltransferase family. As to quaternary structure, homotetramer.

The catalysed reaction is alpha-D-glucose 1-phosphate + ATP + H(+) = ADP-alpha-D-glucose + diphosphate. It participates in glycan biosynthesis; glycogen biosynthesis. Its function is as follows. Involved in the biosynthesis of ADP-glucose, a building block required for the elongation reactions to produce glycogen. Catalyzes the reaction between ATP and alpha-D-glucose 1-phosphate (G1P) to produce pyrophosphate and ADP-Glc. The protein is Glucose-1-phosphate adenylyltransferase of Paraburkholderia phymatum (strain DSM 17167 / CIP 108236 / LMG 21445 / STM815) (Burkholderia phymatum).